The primary structure comprises 1268 residues: Truncated polyprotein 1aTF (1268 aa).

The C4-type; atypical zinc finger occupies 8 to 28 (CMCTPAARVFWNAGQVFCTRC). Residues 69–180 (ECTPSGCCWL…QPFCPFEEAH (112 aa)) form the Peptidase C31 domain. A PCP1-alpha region spans residues 69–182 (ECTPSGCCWL…FCPFEEAHSD (114 aa)). Active-site for Nsp1-alpha papain-like cysteine proteinase activity residues include Cys76 and His146. Residues 269–384 (PNVFDGKCWL…IFRFGAHKWY (116 aa)) form a PCP1-beta region. Positions 269 to 385 (PNVFDGKCWL…FRFGAHKWYG (117 aa)) constitute a Peptidase C32 domain. Active-site for Nsp1-beta papain-like cysteine proteinase activity residues include Cys276 and His345. In terms of domain architecture, Peptidase C33 spans 420–527 (TYSPPTDGSC…VGVCSEGCVA (108 aa)). Active-site for Nsp2 cysteine proteinase activity residues include Cys429 and His498. Disordered regions lie at residues 728-758 (AIGS…SHPA) and 1027-1064 (SVTP…SHAS). The segment covering 737–749 (DSKRENMHNSRED) has biased composition (basic and acidic residues). A run of 4 helical transmembrane segments spans residues 1119-1139 (LWLQ…CSVV), 1153-1173 (FLVL…LLLY), 1194-1214 (VMLS…AALW), and 1233-1253 (VISG…FLLF).

Its subcellular location is the host nucleus. The protein localises to the host cytoplasm. It localises to the host endoplasmic reticulum membrane. It is found in the membrane. In terms of biological role, is essential for viral subgenomic mRNA synthesis. Functionally, inhibits IFN-beta production. Counteracts the action of NF-kappaB by decreasing the phosphorylation of IkappaB-alpha, such that the degradation of IkappaB-alpha is suppressed. This leads to the blockage of NF-kappaB nuclear translocation and thus interference of NF-kappaB activation. Also seems to inhibit IRF3-dependent pathways. Its function is as follows. Nsp1-beta transactivates the programmed ribosomal frameshifting event leading to the expression of the 1aTF polyprotein. In Porcine reproductive and respiratory syndrome virus (isolate Pig/United States/SD 01-08/2001) (PRRSV), this protein is Truncated polyprotein 1aTF.